A 290-amino-acid chain; its full sequence is 4-diphosphocytidyl-2-C-methyl-D-erythritol kinase (290 aa).

Lys13 is a catalytic residue. Pro93 to Ala103 contributes to the ATP binding site. Asp135 is an active-site residue.

Belongs to the GHMP kinase family. IspE subfamily.

The enzyme catalyses 4-CDP-2-C-methyl-D-erythritol + ATP = 4-CDP-2-C-methyl-D-erythritol 2-phosphate + ADP + H(+). It functions in the pathway isoprenoid biosynthesis; isopentenyl diphosphate biosynthesis via DXP pathway; isopentenyl diphosphate from 1-deoxy-D-xylulose 5-phosphate: step 3/6. Its function is as follows. Catalyzes the phosphorylation of the position 2 hydroxy group of 4-diphosphocytidyl-2C-methyl-D-erythritol. In Desulfitobacterium hafniense (strain Y51), this protein is 4-diphosphocytidyl-2-C-methyl-D-erythritol kinase.